The sequence spans 186 residues: ADP-ribosylation factor-like protein 8A (186 aa).

Positions 1-19 form an intramembrane region, note=Mediates targeting to membranes; it reads MIALFNKLLDWFKALFWKE. GTP-binding positions include 29–35, 71–75, and 130–133; these read QYSGKTT, DIGGQ, and NKRD.

This sequence belongs to the small GTPase superfamily. Arf family. As to quaternary structure, interacts with PLEKHM1. When GTP-bound, interacts with RUFY3 and RUFY4, but not with RUFY1, nor RUFY2.

It localises to the late endosome membrane. The protein resides in the lysosome membrane. The protein localises to the cytoplasm. It is found in the cytoskeleton. Its subcellular location is the spindle. It localises to the cell projection. The protein resides in the axon. The protein localises to the synapse. In terms of biological role, plays a role in lysosomes motility. In neurons, mediates the anterograde axonal long-range transport of presynaptic lysosome-related vesicles required for presynaptic biogenesis and synaptic function. May play a role in chromosome segregation. The protein is ADP-ribosylation factor-like protein 8A (Arl8a) of Mus musculus (Mouse).